A 264-amino-acid chain; its full sequence is MAVGKNKGLSKGGKKGVKKKIVDPFTRKDWYDVKAPSMFTKRQVGTTLVNRTQGTKIASEGLKGRVFEVSLADLQADTDAERSFRKFRLIAEDVQGRNVLCNFHGMDLTTDKLRWMVKKWQTLVEANIDVKTTDGYLLRVFCIGFTNKDSLSQRKTCYAQHTQVRAIRKKMCEIITRDVTNSELREVVNKLIPDSIAKDIEKACHGIYPLRDVCIRKVKVLKRPRFEISKLMELHGEGGSGKRGEAGDKSERPEGYEPPVQESV.

Residues 236 to 255 (GEGGSGKRGEAGDKSERPEG) are compositionally biased toward basic and acidic residues. Positions 236-264 (GEGGSGKRGEAGDKSERPEGYEPPVQESV) are disordered.

This sequence belongs to the eukaryotic ribosomal protein eS1 family. Component of the small ribosomal subunit. Mature ribosomes consist of a small (40S) and a large (60S) subunit. The 40S subunit contains about 33 different proteins and 1 molecule of RNA (18S). The 60S subunit contains about 49 different proteins and 3 molecules of RNA (28S, 5.8S and 5S).

The protein localises to the cytoplasm. This is Small ribosomal subunit protein eS1 from Spodoptera frugiperda (Fall armyworm).